A 706-amino-acid polypeptide reads, in one-letter code: Serotransferrin (706 aa).

Residues 1-19 (MRLAIRALLACAVLGLCLA) form the signal peptide. 2 Transferrin-like domains span residues 23-349 (VRWC…NLRE) and 363-691 (VKWC…NLRQ). 2 disulfides stabilise this stretch: C26–C64 and C36–C55. R40 bears the Dimethylated arginine mark. 2 residues coordinate Fe(3+): D79 and Y111. 5 disulfide bridges follow: C134–C215, C174–C190, C177–C198, C187–C200, and C248–C262. Residues T136, R140, A142, and G143 each coordinate hydrogencarbonate. Y209 provides a ligand contact to Fe(3+). H270 provides a ligand contact to Fe(3+). 11 cysteine pairs are disulfide-bonded: C360/C623, C366/C398, C376/C389, C423/C701, C441/C664, C474/C550, C498/C692, C508/C522, C519/C533, C590/C604, and C642/C647. Residue S391 is modified to Phosphoserine. The Fe(3+) site is built by D413 and Y449. Residues T476, R480, A482, and G483 each contribute to the hydrogencarbonate site. Residue N515 is glycosylated (N-linked (GlcNAc...) asparagine). Fe(3+) is bound at residue Y544. H612 lines the Fe(3+) pocket. The residue at position 693 (S693) is a Phosphoserine.

Belongs to the transferrin family. As to quaternary structure, monomer. Part of a complex composed of SLC40A1/ferroportin, TF/transferrin and HEPH/hephaestin that transfers iron from cells to transferrin. In terms of tissue distribution, expressed by the liver and secreted in plasma.

The protein localises to the secreted. Its function is as follows. Transferrins are iron binding transport proteins which can bind two Fe(3+) ions in association with the binding of an anion, usually bicarbonate. It is responsible for the transport of iron from sites of absorption and heme degradation to those of storage and utilization. Serum transferrin may also have a further role in stimulating cell proliferation. This chain is Serotransferrin (TF), found in Equus caballus (Horse).